A 316-amino-acid polypeptide reads, in one-letter code: Ribosomal protein L11 methyltransferase (316 aa).

The S-adenosyl-L-methionine site is built by Thr162, Gly183, Asp205, and Asn248.

This sequence belongs to the methyltransferase superfamily. PrmA family.

The protein resides in the cytoplasm. It carries out the reaction L-lysyl-[protein] + 3 S-adenosyl-L-methionine = N(6),N(6),N(6)-trimethyl-L-lysyl-[protein] + 3 S-adenosyl-L-homocysteine + 3 H(+). Functionally, methylates ribosomal protein L11. This is Ribosomal protein L11 methyltransferase from Levilactobacillus brevis (strain ATCC 367 / BCRC 12310 / CIP 105137 / JCM 1170 / LMG 11437 / NCIMB 947 / NCTC 947) (Lactobacillus brevis).